The chain runs to 167 residues: Gametocyte-specific factor 1 (167 aa).

Position 8 is a phosphoserine (Ser-8). 2 consecutive CHHC U11-48K-type zinc fingers follow at residues Leu-14–His-41 and Leu-48–Ser-75. The Zn(2+) site is built by Cys-17, His-23, His-33, Cys-37, Cys-51, His-57, His-67, and Cys-71.

Belongs to the UPF0224 (FAM112) family. As to expression, expressed abundantly in adult testis, at moderate levels in unfertilized eggs and ovaries and weakly in embryonic stem cells.

It localises to the cytoplasm. Functionally, required for spermatogenesis and is involved in the suppression of retrotransposon transcription in male germ cells. The polypeptide is Gametocyte-specific factor 1 (Mus musculus (Mouse)).